The primary structure comprises 164 residues: Protein PPLZ02 (164 aa).

Positions 7 to 64 (RYRGFRQRHWGSWVSEIRHSILKTRIWQGTFESAEDAARAYDEAARLMCGTRARTNFP) form a DNA-binding region, AP2/ERF.

Its subcellular location is the nucleus. In terms of biological role, essential for all lupin cells independent of the respective tissue. This Lupinus polyphyllus (Large-leaved lupine) protein is Protein PPLZ02 (PPLZ02).